The primary structure comprises 578 residues: Probable actinorhodin transporter (578 aa).

Positions 1–33 (MSSVEADEPDRATAPPSALLPEDGPGPDGTAAG) are disordered. Transmembrane regions (helical) follow at residues 78-98 (VIQW…VVGG), 109-129 (MFVV…VAAG), 135-155 (AARF…LGLI), 170-190 (AFGP…GFLV), 202-222 (VFLI…LLLP), 232-252 (FDVV…FPLV), 259-279 (WPAW…GFVA), 306-326 (GLAV…LLAL), 341-361 (LTMT…GAVL), 369-389 (ALHG…LTIG), 444-464 (LGFT…LGSQ), and 546-566 (AMVR…ALAF).

Belongs to the major facilitator superfamily. EmrB family.

It is found in the cell membrane. Functionally, promotes the efflux of actinorhodin. This is Probable actinorhodin transporter (actII-2) from Streptomyces coelicolor (strain ATCC BAA-471 / A3(2) / M145).